We begin with the raw amino-acid sequence, 511 residues long: Kinesin-like protein 8 (511 aa).

Residues 5–356 (NVRVIVRVRP…LRYSEAARRI (352 aa)) form the Kinesin motor domain. 107-114 (GQKGTGKT) lines the ATP pocket. A phosphoserine mark is found at S278, S279, S284, and S456. Residues 373 to 489 (EGELDDILTT…KLVKSQLHDY (117 aa)) are a coiled coil.

The protein belongs to the TRAFAC class myosin-kinesin ATPase superfamily. Kinesin family.

It localises to the cytoplasm. It is found in the cytoskeleton. The sequence is that of Kinesin-like protein 8 (klp8) from Schizosaccharomyces pombe (strain 972 / ATCC 24843) (Fission yeast).